The following is a 129-amino-acid chain: MSIEFDDSSRHNMNMTQLMQLGAFDRRSGDDFMVQDFKNGIRDCSGIPVNNRNLAFKAYDAVKQKCDSSIKVFNIQDITIKGATWQHHNCQSTGKWYSQLYDYQNTFIGKQEYNILFDCYSYLKYNLNG.

It localises to the cytoplasm. The protein localises to the cytosol. It is found in the nucleus. This is an uncharacterized protein from Schizosaccharomyces pombe (strain 972 / ATCC 24843) (Fission yeast).